Consider the following 156-residue polypeptide: ATP synthase subunit b', chloroplastic (156 aa).

The chain crosses the membrane as a helical span at residues 20–42 (NGTLPLMALQFLTLMVLLNTIFY).

This sequence belongs to the ATPase B chain family. F-type ATPases have 2 components, F(1) - the catalytic core - and F(0) - the membrane proton channel. F(1) has five subunits: alpha(3), beta(3), gamma(1), delta(1), epsilon(1). F(0) has four main subunits: a(1), b(1), b'(1) and c(10-14). The alpha and beta chains form an alternating ring which encloses part of the gamma chain. F(1) is attached to F(0) by a central stalk formed by the gamma and epsilon chains, while a peripheral stalk is formed by the delta, b and b' chains.

Its subcellular location is the plastid. It is found in the chloroplast thylakoid membrane. F(1)F(0) ATP synthase produces ATP from ADP in the presence of a proton or sodium gradient. F-type ATPases consist of two structural domains, F(1) containing the extramembraneous catalytic core and F(0) containing the membrane proton channel, linked together by a central stalk and a peripheral stalk. During catalysis, ATP synthesis in the catalytic domain of F(1) is coupled via a rotary mechanism of the central stalk subunits to proton translocation. Functionally, component of the F(0) channel, it forms part of the peripheral stalk, linking F(1) to F(0). The b'-subunit is a diverged and duplicated form of b found in plants and photosynthetic bacteria. This is ATP synthase subunit b', chloroplastic from Pyropia yezoensis (Susabi-nori).